Here is a 266-residue protein sequence, read N- to C-terminus: Imidazole glycerol phosphate synthase subunit HisF (266 aa).

Residues Asp-11 and Asp-130 contribute to the active site. Residues 134–157 are disordered; it reads RTPEEAARPGPDGAPRGEGWDVYS.

The protein belongs to the HisA/HisF family. Heterodimer of HisH and HisF.

It localises to the cytoplasm. It carries out the reaction 5-[(5-phospho-1-deoxy-D-ribulos-1-ylimino)methylamino]-1-(5-phospho-beta-D-ribosyl)imidazole-4-carboxamide + L-glutamine = D-erythro-1-(imidazol-4-yl)glycerol 3-phosphate + 5-amino-1-(5-phospho-beta-D-ribosyl)imidazole-4-carboxamide + L-glutamate + H(+). Its pathway is amino-acid biosynthesis; L-histidine biosynthesis; L-histidine from 5-phospho-alpha-D-ribose 1-diphosphate: step 5/9. In terms of biological role, IGPS catalyzes the conversion of PRFAR and glutamine to IGP, AICAR and glutamate. The HisF subunit catalyzes the cyclization activity that produces IGP and AICAR from PRFAR using the ammonia provided by the HisH subunit. The polypeptide is Imidazole glycerol phosphate synthase subunit HisF (Paracidovorax citrulli (strain AAC00-1) (Acidovorax citrulli)).